The sequence spans 270 residues: Phospholysine phosphohistidine inorganic pyrophosphate phosphatase (270 aa).

The Mg(2+) site is built by Asp-14 and Ser-16. Substrate-binding positions include 14–16, 52–53, and Lys-187; these read DVS and TN. Asp-212 serves as a coordination point for Mg(2+).

It belongs to the HAD-like hydrolase superfamily. Requires Mg(2+) as cofactor.

The protein localises to the cytoplasm. It localises to the nucleus. It catalyses the reaction diphosphate + H2O = 2 phosphate + H(+). In terms of biological role, phosphatase that hydrolyzes imidodiphosphate, 3-phosphohistidine and 6-phospholysine. Has broad substrate specificity and can also hydrolyze inorganic diphosphate, but with lower efficiency. This Xenopus laevis (African clawed frog) protein is Phospholysine phosphohistidine inorganic pyrophosphate phosphatase (lhpp).